Consider the following 398-residue polypeptide: Nucleotide-sugar uncharacterized transporter 2 (398 aa).

10 helical membrane-spanning segments follow: residues 54–74, 84–104, 119–139, 150–170, 179–199, 201–221, 242–262, 271–291, 299–319, and 322–342; these read FCGP…IILA, FNFP…LLAF, TTPF…SGLA, FYQM…FVLF, VMAL…DLEF, LFGA…KILW, FTVF…VLLF, AILI…LALG, VVLG…IFGS, and GFIS…YTWL.

This sequence belongs to the TPT transporter family. TPT (TC 2.A.7.9) subfamily.

It localises to the membrane. The chain is Nucleotide-sugar uncharacterized transporter 2 from Arabidopsis thaliana (Mouse-ear cress).